The chain runs to 150 residues: Large ribosomal subunit protein uL13 (150 aa).

This sequence belongs to the universal ribosomal protein uL13 family. Part of the 50S ribosomal subunit.

In terms of biological role, this protein is one of the early assembly proteins of the 50S ribosomal subunit, although it is not seen to bind rRNA by itself. It is important during the early stages of 50S assembly. This chain is Large ribosomal subunit protein uL13, found in Mesoplasma florum (strain ATCC 33453 / NBRC 100688 / NCTC 11704 / L1) (Acholeplasma florum).